We begin with the raw amino-acid sequence, 408 residues long: tRNA-specific 2-thiouridylase MnmA (408 aa).

ATP contacts are provided by residues 20-27 (AMSGGVDS) and Leu-46. Residue Cys-114 is the Nucleophile of the active site. Cys-114 and Cys-210 are disulfide-bonded. Gly-138 serves as a coordination point for ATP. The interval 160–162 (RDQ) is interaction with tRNA. Catalysis depends on Cys-210, which acts as the Cysteine persulfide intermediate.

Belongs to the MnmA/TRMU family.

It is found in the cytoplasm. It catalyses the reaction S-sulfanyl-L-cysteinyl-[protein] + uridine(34) in tRNA + AH2 + ATP = 2-thiouridine(34) in tRNA + L-cysteinyl-[protein] + A + AMP + diphosphate + H(+). In terms of biological role, catalyzes the 2-thiolation of uridine at the wobble position (U34) of tRNA, leading to the formation of s(2)U34. The polypeptide is tRNA-specific 2-thiouridylase MnmA (Bartonella quintana (strain Toulouse) (Rochalimaea quintana)).